The sequence spans 421 residues: Serine--tRNA ligase (421 aa).

225 to 227 (TAE) is a binding site for L-serine. ATP contacts are provided by residues 256–258 (RSE) and Val-272. Glu-279 serves as a coordination point for L-serine. 345-348 (ETHS) is a binding site for ATP. Thr-380 is an L-serine binding site.

It belongs to the class-II aminoacyl-tRNA synthetase family. Type-1 seryl-tRNA synthetase subfamily. In terms of assembly, homodimer. The tRNA molecule binds across the dimer.

It is found in the cytoplasm. The catalysed reaction is tRNA(Ser) + L-serine + ATP = L-seryl-tRNA(Ser) + AMP + diphosphate + H(+). It catalyses the reaction tRNA(Sec) + L-serine + ATP = L-seryl-tRNA(Sec) + AMP + diphosphate + H(+). The protein operates within aminoacyl-tRNA biosynthesis; selenocysteinyl-tRNA(Sec) biosynthesis; L-seryl-tRNA(Sec) from L-serine and tRNA(Sec): step 1/1. Catalyzes the attachment of serine to tRNA(Ser). Is also able to aminoacylate tRNA(Sec) with serine, to form the misacylated tRNA L-seryl-tRNA(Sec), which will be further converted into selenocysteinyl-tRNA(Sec). The polypeptide is Serine--tRNA ligase (Thermus thermophilus (strain ATCC 27634 / DSM 579 / HB8)).